A 173-amino-acid chain; its full sequence is NADH-ubiquinone oxidoreductase chain 6 (173 aa).

Transmembrane regions (helical) follow at residues 12-32, 47-67, 94-114, and 142-162; these read VFWLIGVSSNISVYYGVVSLV, GSFLALVLFLIYLGGMLVIFA, VVLAVVFVLVGWGWWGVGECG, and GALMMAMFGLFLTFFIVLVLV.

Belongs to the complex I subunit 6 family.

It is found in the mitochondrion membrane. The enzyme catalyses a ubiquinone + NADH + 5 H(+)(in) = a ubiquinol + NAD(+) + 4 H(+)(out). Core subunit of the mitochondrial membrane respiratory chain NADH dehydrogenase (Complex I) that is believed to belong to the minimal assembly required for catalysis. Complex I functions in the transfer of electrons from NADH to the respiratory chain. The immediate electron acceptor for the enzyme is believed to be ubiquinone. This chain is NADH-ubiquinone oxidoreductase chain 6 (MT-ND6), found in Pelomedusa subrufa (African side-necked turtle).